Here is an 84-residue protein sequence, read N- to C-terminus: Small ribosomal subunit protein bS18 (84 aa).

It belongs to the bacterial ribosomal protein bS18 family. Part of the 30S ribosomal subunit. Forms a tight heterodimer with protein bS6.

Binds as a heterodimer with protein bS6 to the central domain of the 16S rRNA, where it helps stabilize the platform of the 30S subunit. The polypeptide is Small ribosomal subunit protein bS18 (Mycoplasma mobile (strain ATCC 43663 / 163K / NCTC 11711) (Mesomycoplasma mobile)).